The primary structure comprises 709 residues: Putative extracellular sulfatase Sulf-1 homolog (709 aa).

Positions 1–27 are cleaved as a signal peptide; it reads MISNLRISNYFIIFYVLFLIIPIKVTS. Positions 43, 44, and 79 each coordinate Ca(2+). C79 serves as the catalytic Nucleophile. C79 carries the 3-oxoalanine (Cys) modification. N-linked (GlcNAc...) asparagine glycosylation is found at N103, N162, and N189. D308 and H309 together coordinate Ca(2+). N344, N468, N500, N540, N566, N610, and N620 each carry an N-linked (GlcNAc...) asparagine glycan.

This sequence belongs to the sulfatase family. It depends on Ca(2+) as a cofactor. In terms of processing, the conversion to 3-oxoalanine (also known as C-formylglycine, FGly), of a serine or cysteine residue in prokaryotes and of a cysteine residue in eukaryotes, is critical for catalytic activity.

It localises to the endoplasmic reticulum. The protein resides in the golgi apparatus. It is found in the golgi stack. Its subcellular location is the cell surface. This chain is Putative extracellular sulfatase Sulf-1 homolog (sul-1), found in Caenorhabditis elegans.